Consider the following 975-residue polypeptide: MLSRLSLLSNSRAFQQARWRIYRLKVSPTVHASQYHILSGRKLAQSIREKANDEIQAIKLKHPNFKPTLKIIQVGARPDSSTYVRMKLKASKDSNVDCIIEKLPAEITEVELLKKISDINDDDSIHGLLIQLPLPRHLDETTITNAVDFKKDVDGFHRYNAGELAKKGGKPYFIPCTPYGCMKLLEEAHVKLDGKNAVVLGRSSIVGNPIASLLKNANATVTVCHSHTRNIAEVVSQADIVIAACGIPQYVKSDWIKEGAVVIDVGINYVPDISKKSGQKLVGDVDFDSVKEKTSYITPVPGGVGPMTVAMLVSNVLLAAKRQFVESEKLPVIKPLPLHLESPVPSDIDISRAQSPKHIKQVAEELGIHSHELELYGHYKAKISPNIFKRLESRENGKYVLVAGITPTPLGEGKSTTTMGLVQALSAHLGKPSIANVRQPSLGPTLGVKGGAAGGGYAQVIPMDEFNLHLTGDIHAISAANNLLAAAIDTRMFHEATQKNDSTFYKRLVPRKKGIRKFTPSMQRRLKRLDIEKEDPDALTPEEVKRFARLNINPDTITIRRVVDINDRMLRQITIGEAATEKGFTRTTGFDITVASELMAILALSKSLHEMKERIGRMVIGADYDNKPVTVEDIGCTGALTALLRDAIKPNLMQTLEGTPVMVHAGPFANISIGASSVIADLMALKLVGSEKNPLNDKNIHEPGYVVTEAGFDFAMGGERFFDIKCRSSGLVPDAVVLVATVRALKSHGGAPNVKPGQSLPKEYTEENIDFVAKGVSNLVKQIENIKTFGIPVVVAINRFETDSQAEIEVIKKAALNAGASHAVTSNHWMEGGKGAVELAHAVVDATKEPKNFNFLYDVNSSIEDKLTSIVQKMYGGAKIEVSPEAQKKIDTYKKQGFGNLPICIAKTQYSLSHDPSLKGVPRGFTFPIRDVRASIGAGYLYALAAEIQTIPGLSTYAGYMAVEVDDDGEIEGLF.

A mitochondrion-targeting transit peptide spans 1 to 34 (MLSRLSLLSNSRAFQQARWRIYRLKVSPTVHASQ). The methylenetetrahydrofolate dehydrogenase and cyclohydrolase stretch occupies residues 35 to 343 (YHILSGRKLA…KPLPLHLESP (309 aa)). Substrate contacts are provided by residues 83-87 (YVRMK) and 130-132 (IQL). NADP(+) contacts are provided by residues 201–203 (GRS) and Ser-226. 301–305 (PGGVG) lines the substrate pocket. The tract at residues 344–975 (VPSDIDISRA…DDDGEIEGLF (632 aa)) is formyltetrahydrofolate synthetase. An ATP-binding site is contributed by 408 to 415 (TPLGEGKS).

In the N-terminal section; belongs to the tetrahydrofolate dehydrogenase/cyclohydrolase family. It in the C-terminal section; belongs to the formate--tetrahydrofolate ligase family. As to quaternary structure, homodimer.

It localises to the mitochondrion. The catalysed reaction is (6R)-5,10-methylene-5,6,7,8-tetrahydrofolate + NADP(+) = (6R)-5,10-methenyltetrahydrofolate + NADPH. It catalyses the reaction (6R)-5,10-methenyltetrahydrofolate + H2O = (6R)-10-formyltetrahydrofolate + H(+). The enzyme catalyses (6S)-5,6,7,8-tetrahydrofolate + formate + ATP = (6R)-10-formyltetrahydrofolate + ADP + phosphate. The protein operates within one-carbon metabolism; tetrahydrofolate interconversion. In terms of biological role, mitochondrial isozyme of C-1-tetrahydrofolate synthase. The trifunctional enzyme catalyzes the interconversion of the one-carbon derivatives of tetrahydrofolate (THF) between different oxidation states by the enzymatic activities 10-formyltetrahydrofolate synthetase, 5,lO-methenyltetrahydrofolate cyclohydrolase, and 5,lO-methylenetetrahydrofolate dehydrogenase. The sequence is that of C-1-tetrahydrofolate synthase, mitochondrial from Saccharomyces cerevisiae (strain ATCC 204508 / S288c) (Baker's yeast).